We begin with the raw amino-acid sequence, 334 residues long: Putative 2-hydroxyacid dehydrogenase UNK4.10 (334 aa).

Residues 166 to 167, 244 to 246, and D270 contribute to the NAD(+) site; these read GI and TAR. The active site involves R246. Residue E275 is part of the active site. H293 acts as the Proton donor in catalysis. 293 to 296 contributes to the NAD(+) binding site; it reads HLGT.

Belongs to the D-isomer specific 2-hydroxyacid dehydrogenase family.

The sequence is that of Putative 2-hydroxyacid dehydrogenase UNK4.10 from Schizosaccharomyces pombe (strain 972 / ATCC 24843) (Fission yeast).